The following is a 472-amino-acid chain: 2-oxoisovalerate dehydrogenase subunit alpha 2, mitochondrial (472 aa).

185–187 contacts thiamine diphosphate; that stretch reads QYR. K(+)-binding residues include S234, T239, and Q240.

Belongs to the BCKDHA family. In terms of assembly, heterotetramer of alpha and beta chains. The cofactor is thiamine diphosphate.

The protein resides in the mitochondrion matrix. It carries out the reaction N(6)-[(R)-lipoyl]-L-lysyl-[protein] + 3-methyl-2-oxobutanoate + H(+) = N(6)-[(R)-S(8)-2-methylpropanoyldihydrolipoyl]-L-lysyl-[protein] + CO2. In terms of biological role, the branched-chain alpha-keto dehydrogenase complex catalyzes the overall conversion of alpha-keto acids to acyl-CoA and CO(2). It contains multiple copies of three enzymatic components: branched-chain alpha-keto acid decarboxylase (E1), lipoamide acyltransferase (E2) and lipoamide dehydrogenase (E3). This is 2-oxoisovalerate dehydrogenase subunit alpha 2, mitochondrial from Arabidopsis thaliana (Mouse-ear cress).